Consider the following 145-residue polypeptide: Large ribosomal subunit protein bL35c (145 aa).

The N-terminal 56 residues, M1–V56, are a transit peptide targeting the chloroplast.

It belongs to the bacterial ribosomal protein bL35 family. In terms of assembly, part of the 50S ribosomal subunit.

It localises to the plastid. Its subcellular location is the chloroplast. This is Large ribosomal subunit protein bL35c from Arabidopsis thaliana (Mouse-ear cress).